The following is a 556-amino-acid chain: F-box protein YDR131C (556 aa).

In terms of domain architecture, F-box spans 1–44 (MFDKLPYEIFKQIAWRIPQEDKISLTYVCKRSYESIIPFIYQNL).

Interacts with SKP1. Component of the probable SCF(YDR131C) complex containing CDC53, SKP1, RBX1 and YDR131C.

The protein localises to the vacuole. The protein operates within protein modification; protein ubiquitination. In terms of biological role, substrate recognition component of a SCF (SKP1-CUL1-F-box protein) E3 ubiquitin-protein ligase complex which mediates the ubiquitination and subsequent proteasomal degradation of target proteins. Probably recognizes and binds to phosphorylated target proteins. This chain is F-box protein YDR131C, found in Saccharomyces cerevisiae (strain ATCC 204508 / S288c) (Baker's yeast).